The following is a 79-amino-acid chain: Sulfur carrier protein TusA (79 aa).

The Cysteine persulfide intermediate role is filled by C17.

It belongs to the sulfur carrier protein TusA family.

It is found in the cytoplasm. Functionally, sulfur carrier protein which probably makes part of a sulfur-relay system. The sequence is that of Sulfur carrier protein TusA from Haemophilus ducreyi (strain 35000HP / ATCC 700724).